We begin with the raw amino-acid sequence, 106 residues long: UPF0473 protein LSEI_0788 (106 aa).

Belongs to the UPF0473 family.

The sequence is that of UPF0473 protein LSEI_0788 from Lacticaseibacillus paracasei (strain ATCC 334 / BCRC 17002 / CCUG 31169 / CIP 107868 / KCTC 3260 / NRRL B-441) (Lactobacillus paracasei).